The sequence spans 1392 residues: DNA-directed RNA polymerase subunit beta'' (1392 aa).

Zn(2+) contacts are provided by C224, C295, C302, and C305.

Belongs to the RNA polymerase beta' chain family. RpoC2 subfamily. In terms of assembly, in plastids the minimal PEP RNA polymerase catalytic core is composed of four subunits: alpha, beta, beta', and beta''. When a (nuclear-encoded) sigma factor is associated with the core the holoenzyme is formed, which can initiate transcription. The cofactor is Zn(2+).

The protein resides in the plastid. It localises to the chloroplast. The catalysed reaction is RNA(n) + a ribonucleoside 5'-triphosphate = RNA(n+1) + diphosphate. Its function is as follows. DNA-dependent RNA polymerase catalyzes the transcription of DNA into RNA using the four ribonucleoside triphosphates as substrates. This chain is DNA-directed RNA polymerase subunit beta'', found in Eucalyptus globulus subsp. globulus (Tasmanian blue gum).